A 360-amino-acid polypeptide reads, in one-letter code: Phospho-N-acetylmuramoyl-pentapeptide-transferase (360 aa).

10 helical membrane-spanning segments follow: residues 21 to 41, 73 to 93, 94 to 114, 132 to 152, 168 to 188, 199 to 219, 235 to 255, 263 to 283, 288 to 308, and 338 to 358; these read YITV…LWIG, TMGG…WANL, ANPY…IGFV, WKYF…YAIG, IMPQ…VGTS, GLAI…AWAT, FSAE…GFLW, VFMG…VAVL, FLLV…ILQV, and VIVR…VTLK.

The protein belongs to the glycosyltransferase 4 family. MraY subfamily. The cofactor is Mg(2+).

It is found in the cell inner membrane. The enzyme catalyses UDP-N-acetyl-alpha-D-muramoyl-L-alanyl-gamma-D-glutamyl-meso-2,6-diaminopimeloyl-D-alanyl-D-alanine + di-trans,octa-cis-undecaprenyl phosphate = di-trans,octa-cis-undecaprenyl diphospho-N-acetyl-alpha-D-muramoyl-L-alanyl-D-glutamyl-meso-2,6-diaminopimeloyl-D-alanyl-D-alanine + UMP. Its pathway is cell wall biogenesis; peptidoglycan biosynthesis. Functionally, catalyzes the initial step of the lipid cycle reactions in the biosynthesis of the cell wall peptidoglycan: transfers peptidoglycan precursor phospho-MurNAc-pentapeptide from UDP-MurNAc-pentapeptide onto the lipid carrier undecaprenyl phosphate, yielding undecaprenyl-pyrophosphoryl-MurNAc-pentapeptide, known as lipid I. This is Phospho-N-acetylmuramoyl-pentapeptide-transferase from Pasteurella multocida (strain Pm70).